Reading from the N-terminus, the 254-residue chain is Imidazole glycerol phosphate synthase subunit HisF (254 aa).

Active-site residues include aspartate 11 and aspartate 130.

It belongs to the HisA/HisF family. As to quaternary structure, heterodimer of HisH and HisF.

It localises to the cytoplasm. The catalysed reaction is 5-[(5-phospho-1-deoxy-D-ribulos-1-ylimino)methylamino]-1-(5-phospho-beta-D-ribosyl)imidazole-4-carboxamide + L-glutamine = D-erythro-1-(imidazol-4-yl)glycerol 3-phosphate + 5-amino-1-(5-phospho-beta-D-ribosyl)imidazole-4-carboxamide + L-glutamate + H(+). The protein operates within amino-acid biosynthesis; L-histidine biosynthesis; L-histidine from 5-phospho-alpha-D-ribose 1-diphosphate: step 5/9. In terms of biological role, IGPS catalyzes the conversion of PRFAR and glutamine to IGP, AICAR and glutamate. The HisF subunit catalyzes the cyclization activity that produces IGP and AICAR from PRFAR using the ammonia provided by the HisH subunit. This Halorhodospira halophila (strain DSM 244 / SL1) (Ectothiorhodospira halophila (strain DSM 244 / SL1)) protein is Imidazole glycerol phosphate synthase subunit HisF.